Here is a 227-residue protein sequence, read N- to C-terminus: 2,3-bisphosphoglycerate-dependent phosphoglycerate mutase (227 aa).

Substrate is bound by residues Arg8–Asn15, Thr21–Gly22, Arg58, Glu110–Tyr113, Lys121, Arg137–Arg138, and Gly181–Asn182. Residue His9 is the Tele-phosphohistidine intermediate of the active site. Glu110 serves as the catalytic Proton donor/acceptor.

It belongs to the phosphoglycerate mutase family. BPG-dependent PGAM subfamily. Homodimer.

It carries out the reaction (2R)-2-phosphoglycerate = (2R)-3-phosphoglycerate. It functions in the pathway carbohydrate degradation; glycolysis; pyruvate from D-glyceraldehyde 3-phosphate: step 3/5. Functionally, catalyzes the interconversion of 2-phosphoglycerate and 3-phosphoglycerate. The polypeptide is 2,3-bisphosphoglycerate-dependent phosphoglycerate mutase (Pseudoalteromonas atlantica (strain T6c / ATCC BAA-1087)).